We begin with the raw amino-acid sequence, 166 residues long: Small ribosomal subunit protein uS5 (166 aa).

Residues Y12–V75 enclose the S5 DRBM domain.

The protein belongs to the universal ribosomal protein uS5 family. Part of the 30S ribosomal subunit. Contacts proteins S4 and S8.

Functionally, with S4 and S12 plays an important role in translational accuracy. Located at the back of the 30S subunit body where it stabilizes the conformation of the head with respect to the body. This Pseudomonas savastanoi pv. phaseolicola (strain 1448A / Race 6) (Pseudomonas syringae pv. phaseolicola (strain 1448A / Race 6)) protein is Small ribosomal subunit protein uS5.